A 137-amino-acid chain; its full sequence is MKNLLVFIFVFSLCMFDHVSGAGIRIGNELKFQKLLWMRCYSKDDVLGPKIIPIGGHFVTYFSVNIWRTTRFMCTLKQGPNYRHYQNFTAFKLFGMEDHGDVWDWRARENEIYLKKKEGGKFIKNPVNMHKVYDWIN.

An N-terminal signal peptide occupies residues 1–21; sequence MKNLLVFIFVFSLCMFDHVSG. Asparagine 87 carries N-linked (GlcNAc...) asparagine glycosylation.

This sequence belongs to the plant self-incompatibility (S1) protein family.

Its subcellular location is the secreted. The chain is S-protein homolog 16 from Arabidopsis thaliana (Mouse-ear cress).